A 163-amino-acid chain; its full sequence is Peptide methionine sulfoxide reductase MsrA 1 (163 aa).

The active site involves Cys-21.

It belongs to the MsrA Met sulfoxide reductase family.

The catalysed reaction is L-methionyl-[protein] + [thioredoxin]-disulfide + H2O = L-methionyl-(S)-S-oxide-[protein] + [thioredoxin]-dithiol. It catalyses the reaction [thioredoxin]-disulfide + L-methionine + H2O = L-methionine (S)-S-oxide + [thioredoxin]-dithiol. Has an important function as a repair enzyme for proteins that have been inactivated by oxidation. Catalyzes the reversible oxidation-reduction of methionine sulfoxide in proteins to methionine. The sequence is that of Peptide methionine sulfoxide reductase MsrA 1 (msrA1) from Nostoc sp. (strain PCC 7120 / SAG 25.82 / UTEX 2576).